The chain runs to 501 residues: Glycerol kinase (501 aa).

Threonine 16 contacts ADP. ATP is bound by residues threonine 16, threonine 17, and serine 18. Threonine 16 contributes to the sn-glycerol 3-phosphate binding site. Arginine 20 lines the ADP pocket. Sn-glycerol 3-phosphate is bound by residues arginine 84, glutamate 85, tyrosine 135, and aspartate 242. Glycerol is bound by residues arginine 84, glutamate 85, tyrosine 135, aspartate 242, and glutamine 243. Positions 264 and 307 each coordinate ADP. The ATP site is built by threonine 264, glycine 307, glutamine 311, and glycine 408. Position 408 (glycine 408) interacts with ADP.

It belongs to the FGGY kinase family.

It catalyses the reaction glycerol + ATP = sn-glycerol 3-phosphate + ADP + H(+). The protein operates within polyol metabolism; glycerol degradation via glycerol kinase pathway; sn-glycerol 3-phosphate from glycerol: step 1/1. Key enzyme in the regulation of glycerol uptake and metabolism. Catalyzes the phosphorylation of glycerol to yield sn-glycerol 3-phosphate. This is Glycerol kinase from Saccharolobus islandicus (strain M.16.27) (Sulfolobus islandicus).